We begin with the raw amino-acid sequence, 445 residues long: Canavalin (445 aa).

A signal peptide spans 1-26; it reads MAFSARFPLWLLLGVVLLASVSASFA. Cupin type-1 domains lie at 49 to 207 and 249 to 407; these read YLFR…DEIE and FNLR…EEVE.

It belongs to the 7S seed storage protein family. Homotrimer.

Functionally, seed storage protein. This Canavalia gladiata (Sword bean) protein is Canavalin.